The sequence spans 202 residues: Imidazoleglycerol-phosphate dehydratase (202 aa).

It belongs to the imidazoleglycerol-phosphate dehydratase family.

It is found in the cytoplasm. It carries out the reaction D-erythro-1-(imidazol-4-yl)glycerol 3-phosphate = 3-(imidazol-4-yl)-2-oxopropyl phosphate + H2O. It functions in the pathway amino-acid biosynthesis; L-histidine biosynthesis; L-histidine from 5-phospho-alpha-D-ribose 1-diphosphate: step 6/9. The polypeptide is Imidazoleglycerol-phosphate dehydratase (Mycolicibacterium gilvum (strain PYR-GCK) (Mycobacterium gilvum (strain PYR-GCK))).